We begin with the raw amino-acid sequence, 338 residues long: MELPILPTSVIGSYPKPRWLLRMYRLRDLGKIPEEDFKEAVKDASVSVLREHERAGVDIPWDGEMWRTEMTEHFTAKIGGFKFYGPVRVWGNAYFNKAAAVDKLEYKEPLVLEEFLWVKKNTTREVVKIPITGPYTIAEWSFNEYYPDKESFIMDLAKIINKELKMLENHGALYIQLDEPAMLNHPDEVPLAVEAINKAVKGIKIKVGLHVCYSNYYLLADYFDEIRVTQFALEFANRQFRDMDFLKKLSNKELGFGVVDVHNPRIESVEEIVKAIKKVFEYVEPELLYINPDCGMKLLDRNIAYNKLVNMVKATELVRKELEREGKKTTEFRTLKDI.

Residues His-210, Cys-212, Glu-234, and Cys-294 each coordinate Zn(2+).

It belongs to the archaeal MetE family. Requires Zn(2+) as cofactor.

Its pathway is amino-acid biosynthesis; L-methionine biosynthesis via de novo pathway. Functionally, catalyzes the transfer of a methyl group to L-homocysteine resulting in methionine formation. The physiological methyl donor is unknown. This Pyrococcus horikoshii (strain ATCC 700860 / DSM 12428 / JCM 9974 / NBRC 100139 / OT-3) protein is Methionine synthase.